The sequence spans 141 residues: MAFTACEKQTIGKIAQVLAKSPEAYGAECLARLFVTHPGSKSYFEYKDYSAAGAKVQVHGGKVIRAVVKAAEHVDDLHSHLETLALTHGKKLLVDPQNFPMLSECIIVTLATHLTEFSPDTHCAVDKLLSAICQELSSRYR.

In terms of domain architecture, Globin spans 2-141 (AFTACEKQTI…ICQELSSRYR (140 aa)). His59 contributes to the O2 binding site. His88 contacts heme b.

Belongs to the globin family. As to quaternary structure, heterotetramer of two alpha chains and two beta chains. Red blood cells.

Involved in oxygen transport from gills to the various peripheral tissues. This Mustelus griseus (Spotless smooth-hound) protein is Hemoglobin subunit alpha (HBA).